The sequence spans 444 residues: GTPase Der (444 aa).

2 EngA-type G domains span residues 3-167 (PIVA…PEAE) and 180-353 (LRLA…AECQ). GTP-binding positions include 9–16 (GRPNVGKS), 56–60 (DTGGM), 119–122 (NKVD), 186–193 (GRPNAGKS), 233–237 (DTAGV), and 298–301 (NKTD). Residues 354 to 438 (IRIGTGELNR…PVKVVCRASH (85 aa)) enclose the KH-like domain.

Belongs to the TRAFAC class TrmE-Era-EngA-EngB-Septin-like GTPase superfamily. EngA (Der) GTPase family. Associates with the 50S ribosomal subunit.

Its function is as follows. GTPase that plays an essential role in the late steps of ribosome biogenesis. This Solidesulfovibrio magneticus (strain ATCC 700980 / DSM 13731 / RS-1) (Desulfovibrio magneticus) protein is GTPase Der.